The primary structure comprises 93 residues: Small ribosomal subunit protein uS15 (93 aa).

It belongs to the universal ribosomal protein uS15 family. As to quaternary structure, part of the 30S ribosomal subunit. Forms a bridge to the 50S subunit in the 70S ribosome, contacting the 23S rRNA.

Its function is as follows. One of the primary rRNA binding proteins, it binds directly to 16S rRNA where it helps nucleate assembly of the platform of the 30S subunit by binding and bridging several RNA helices of the 16S rRNA. Forms an intersubunit bridge (bridge B4) with the 23S rRNA of the 50S subunit in the ribosome. This chain is Small ribosomal subunit protein uS15, found in Ehrlichia chaffeensis (strain ATCC CRL-10679 / Arkansas).